Here is an 85-residue protein sequence, read N- to C-terminus: U1-ctenitoxin-Pn1a (85 aa).

Positions 1–16 are cleaved as a signal peptide; the sequence is MKVAIVFLSLLVLAFA. Positions 17–34 are excised as a propeptide; sequence SESIEENREEFPVEESAR. Disulfide bonds link Cys-35/Cys-49, Cys-42/Cys-55, Cys-46/Cys-81, Cys-48/Cys-65, and Cys-57/Cys-63. The propeptide occupies 82–85; that stretch reads QNKI.

It belongs to the neurotoxin 03 (Tx2) family. 05 subfamily. Expressed by the venom gland.

Its subcellular location is the secreted. Its function is as follows. Insecticidal neurotoxin that reversibly inhibits the N-methyl-D-aspartate (NMDA)-subtype of ionotropic glutamate receptor (GRIN) and inhibits inactivation of insect sodium channels (Nav). In vivo, is highly toxic to insects. This is U1-ctenitoxin-Pn1a from Phoneutria nigriventer (Brazilian armed spider).